The primary structure comprises 115 residues: uncharacterized protein (115 aa).

This is an uncharacterized protein from Rickettsia prowazekii (strain Madrid E).